We begin with the raw amino-acid sequence, 419 residues long: Inward rectifier potassium channel 16 (419 aa).

Over 1–67 (MSYYGSSYRI…MVDIFTTLVD (67 aa)) the chain is Cytoplasmic. A helical transmembrane segment spans residues 68–94 (TKWRHMFVVFSLSYILSWLIFGSIFWL). Residues 95–117 (IALHHGDLLSDPDITPCVDNVHS) lie on the Extracellular side of the membrane. An intramembrane region (helical; Pore-forming) is located at residues 118-134 (FTAAFLFSLETQTTIGY). Positions 131 to 136 (TIGYGY) match the Selectivity filter motif. Residues 135–143 (GYRCVTEEC) are Extracellular-facing. The helical transmembrane segment at 144 to 171 (SVAVLTVILQSILSCIINTFIIGAALAK) threads the bilayer. Residues 172 to 419 (MATARKRAQT…LNRISMESQM (248 aa)) are Cytoplasmic-facing. Residues S358, S374, and S376 each carry the phosphoserine modification.

This sequence belongs to the inward rectifier-type potassium channel (TC 1.A.2.1) family. KCNJ16 subfamily. In terms of assembly, it forms heteromeric channels with Kir4.1/KCNJ10; this interaction is required for KCNJ16 localization to the basolateral membrane in kidney cells. As a heteromer with KCNJ10, may interact with MAGI1; this interaction may facilitate KCNJ10/KCNJ16 potassium channel expression at the basolateral membrane in kidney cells. May form heteromers with Kir2.1/KCNJ2. Can form heteromeric channels with Kir4.2/KCNJ15. As to expression, expressed in the brain, testis, liver, spleen, kidney, submaxillary gland and adrenals. In the kidney, expressed in the epithelial cells of both proximal and distal convoluted tubules, in the endothelial cells surrounding glomerular capillaries and in the flattened parietal layer of Bowman's capsule.

Its subcellular location is the membrane. The protein resides in the basolateral cell membrane. It catalyses the reaction K(+)(in) = K(+)(out). With respect to regulation, channel activity is strongly regulated by variations of cytosolic pH; channels are activated by alkaline and inhibited by acidic pH values. Activated by phosphatidylinositol 4,5 biphosphate (PtdIns(4,5)P2). Inward rectifier potassium channels are characterized by a greater tendency to allow potassium to flow into the cell rather than out of it. Their voltage dependence is regulated by the concentration of extracellular potassium; as external potassium is raised, the voltage range of the channel opening shifts to more positive voltages. The inward rectification is mainly due to the blockage of outward current by internal magnesium. KCNJ16 may be involved in the regulation of fluid and pH balance. In the kidney, together with KCNJ10, mediates basolateral K(+) recycling in distal tubules; this process is critical for Na(+) reabsorption at the tubules. The protein is Inward rectifier potassium channel 16 (Kcnj16) of Rattus norvegicus (Rat).